Reading from the N-terminus, the 220-residue chain is Vesicle-associated membrane protein 7 (220 aa).

The residue at position 2 (Ala-2) is an N-acetylalanine. Residues 2–188 are Cytoplasmic-facing; it reads AILFAVVARG…ARAMCVKNVK (187 aa). Residues 7–110 enclose the Longin domain; that stretch reads VVARGTTILA…AMNSEFSSVL (104 aa). A v-SNARE coiled-coil homology domain is found at 125 to 185; it reads RVTETQAQVD…RNLARAMCVK (61 aa). 2 positions are modified to phosphoserine: Ser-167 and Ser-168. Residues 189–209 form a helical; Anchor for type IV membrane protein membrane-spanning segment; it reads LTAIIVVVSIVFIYIIVSPLC. The Vesicular portion of the chain corresponds to 210-220; the sequence is GGFTWPSCVKK.

The protein belongs to the synaptobrevin family. May interact with STX17. Component of the SNARE complex composed of STX4, SNAP23 and VAMP7 that binds SYT7 during lysosomal exocytosis. Component of the SNARE complex composed of STX7, STX8, VAMP7 and VTI1B that is required for heterotypic fusion of late endosomes with lysosomes. Interacts with PICALM. Interacts with RAB21. In terms of tissue distribution, expressed in brain, kidney, liver, lung, spleen and thymus. Not expressed in heart and skeletal muscle.

Its subcellular location is the cytoplasmic vesicle. The protein localises to the secretory vesicle membrane. It is found in the golgi apparatus. The protein resides in the trans-Golgi network membrane. It localises to the late endosome membrane. Its subcellular location is the lysosome membrane. The protein localises to the endoplasmic reticulum membrane. It is found in the phagosome membrane. The protein resides in the synapse. It localises to the synaptosome. Its function is as follows. Involved in the targeting and/or fusion of transport vesicles to their target membrane during transport of proteins from the early endosome to the lysosome. Required for heterotypic fusion of late endosomes with lysosomes and homotypic lysosomal fusion. Required for calcium regulated lysosomal exocytosis. Involved in the export of chylomicrons from the endoplasmic reticulum to the cis Golgi. Required for exocytosis of mediators during eosinophil and neutrophil degranulation, and target cell killing by natural killer cells. Required for focal exocytosis of late endocytic vesicles during phagosome formation. In Rattus norvegicus (Rat), this protein is Vesicle-associated membrane protein 7 (Vamp7).